Reading from the N-terminus, the 753-residue chain is CCR4-NOT transcription complex subunit 3 (753 aa).

The segment at 240-534 (ATSPPSHSHM…PPQFSTAPEI (295 aa)) is disordered. A compositionally biased stretch (low complexity) spans 257–268 (SSSTPTSTTSSS). Residues 284–293 (DDKKRGRSTD) are compositionally biased toward basic and acidic residues. Thr-292 carries the post-translational modification Phosphothreonine. Positions 294-315 (SEVSQSPAKNGSKPVHSNQHPQ) are enriched in polar residues. The residue at position 299 (Ser-299) is a Phosphoserine. Positions 317–330 (PAVPPTYPSGPPPA) are enriched in pro residues. Over residues 350–376 (PSALGPKASPAPSHNSGTPAPYAQAVA) the composition is skewed to low complexity. A compositionally biased stretch (gly residues) spans 396–408 (SGGGGGGSGGGGS). Positions 424-433 (NGATSYSSVV) are enriched in polar residues. The segment covering 441 to 457 (ALSSSGGNNASSQALGP) has biased composition (low complexity). The segment covering 458-467 (PSGPHNPPPS) has biased composition (pro residues). The segment covering 479–491 (GAGGVAPGSGNNS) has biased composition (gly residues). Residue Ser-542 is modified to Phosphoserine. Residues 661-753 (EFYQRLSTET…YRYLEDRDLQ (93 aa)) are repressor domain.

The protein belongs to the CNOT2/3/5 family. In terms of assembly, component of the CCR4-NOT complex; distinct complexes seem to exist that differ in the participation of probably mutually exclusive catalytic subunits. In the complex interacts directly with CNOT2. Interacts with TIP120B and NANOS2. Interacts with EBF1. Interacts in an RNA-independent manner with BICC1 (via KH domains). Ubiquitous. Highly expressed in brain, heart, thymus, spleen, kidney, liver, small intestine, lung and peripheral blood leukocytes.

Its subcellular location is the cytoplasm. The protein resides in the nucleus. It localises to the P-body. In terms of biological role, component of the CCR4-NOT complex which is one of the major cellular mRNA deadenylases and is linked to various cellular processes including bulk mRNA degradation, miRNA-mediated repression, translational repression during translational initiation and general transcription regulation. Additional complex functions may be a consequence of its influence on mRNA expression. May be involved in metabolic regulation; may be involved in recruitment of the CCR4-NOT complex to deadenylation target mRNAs involved in energy metabolism. Involved in mitotic progression and regulation of the spindle assembly checkpoint by regulating the stability of MAD1L1 mRNA. Can repress transcription and may link the CCR4-NOT complex to transcriptional regulation; the repressive function may involve histone deacetylases. Involved in the maintenance of embryonic stem (ES) cell identity. The sequence is that of CCR4-NOT transcription complex subunit 3 from Homo sapiens (Human).